The chain runs to 626 residues: ATP-dependent zinc metalloprotease FtsH 3 (626 aa).

The Cytoplasmic portion of the chain corresponds to 1–7 (MNKLFRS). A helical transmembrane segment spans residues 8 to 28 (LAFYMLILVISVAIAVQLGGT). The Extracellular segment spans residues 29 to 103 (SQQTTQLVYS…LDFRQDNTSG (75 aa)). The helical transmembrane segment at 104 to 124 (IWAMLLQTLVPVVLVLLAFFF) threads the bilayer. At 125 to 626 (IMQQTQGSGN…GGTSQVAPAF (502 aa)) the chain is on the cytoplasmic side. 197 to 204 (GPPGTGKT) is an ATP binding site. Position 420 (H420) interacts with Zn(2+). E421 is an active-site residue. H424 and D496 together coordinate Zn(2+). The segment at 602–626 (PPRPKPEPLKPRMVGGGTSQVAPAF) is disordered.

The protein in the central section; belongs to the AAA ATPase family. This sequence in the C-terminal section; belongs to the peptidase M41 family. Homohexamer. Zn(2+) serves as cofactor.

Its subcellular location is the cell membrane. Functionally, acts as a processive, ATP-dependent zinc metallopeptidase for both cytoplasmic and membrane proteins. Plays a role in the quality control of integral membrane proteins. This is ATP-dependent zinc metalloprotease FtsH 3 from Symbiobacterium thermophilum (strain DSM 24528 / JCM 14929 / IAM 14863 / T).